Consider the following 312-residue polypeptide: MNWTEVAIVANHEVSPIITNLLEDYGSNGVVIEDSEDLTHDFEDKYGEIYALNAEDYPTQGVRVKAYFNEIKYTKDFQEKLIQSLKDIESLDLDLFSFDEQTIREQDWENEWKHYFHPFRASEKFTIVPSWETYQQEDDSELCIELDPGMAFGTGDHPTTSMCLKAIEAYVKSSDSVIDVGTGSGILSIAAHLLGVKRIKALDVDEMAVRVAKENFQKNNCEYAIEAVPGNLLKEETEKFDVVIANILAHIIEEMIDDAYNTLNKDGYFITSGIIEEKHEAIVEHMKRSGFEIVSINHDNSWVCIVGQKVSD.

4 residues coordinate S-adenosyl-L-methionine: Thr-160, Gly-181, Asp-203, and Asn-246.

It belongs to the methyltransferase superfamily. PrmA family.

The protein localises to the cytoplasm. It carries out the reaction L-lysyl-[protein] + 3 S-adenosyl-L-methionine = N(6),N(6),N(6)-trimethyl-L-lysyl-[protein] + 3 S-adenosyl-L-homocysteine + 3 H(+). Its function is as follows. Methylates ribosomal protein L11. In Staphylococcus saprophyticus subsp. saprophyticus (strain ATCC 15305 / DSM 20229 / NCIMB 8711 / NCTC 7292 / S-41), this protein is Ribosomal protein L11 methyltransferase.